The sequence spans 317 residues: MVTVVDKVTSMRVRHPEKAHRPDTSIQKKPDWIRVKAPTSQVYKETHGIVRANKLVTVCEEAGCPNVGECWSQRHASFMILGEICTRACAFCNVATGIPLAVDDDEPERVADAVAQMGLKHVVITSVDRDDLADGGAQHFAKVIYAIRRKSLGTTIEVLTPDFRHKDHALEIVVAAKPDVFNHNLETVPSKYLKVRPGARYFHSIRLLQRVKEIDPMIFTKSGIMVGFGEERNEILQLMDDLRSADVDFMTIGQYLQPTRKHHPVIRFLPPDEFESFAKIGKAKGFLHMASSPLTRSSHHAGDDFEILKKARAQKFS.

[4Fe-4S] cluster is bound by residues Cys-59, Cys-64, Cys-70, Cys-85, Cys-89, Cys-92, and Ser-298. The 217-residue stretch at 71-287 (WSQRHASFMI…AKIGKAKGFL (217 aa)) folds into the Radical SAM core domain.

The protein belongs to the radical SAM superfamily. Lipoyl synthase family. [4Fe-4S] cluster is required as a cofactor.

It is found in the cytoplasm. The enzyme catalyses [[Fe-S] cluster scaffold protein carrying a second [4Fe-4S](2+) cluster] + N(6)-octanoyl-L-lysyl-[protein] + 2 oxidized [2Fe-2S]-[ferredoxin] + 2 S-adenosyl-L-methionine + 4 H(+) = [[Fe-S] cluster scaffold protein] + N(6)-[(R)-dihydrolipoyl]-L-lysyl-[protein] + 4 Fe(3+) + 2 hydrogen sulfide + 2 5'-deoxyadenosine + 2 L-methionine + 2 reduced [2Fe-2S]-[ferredoxin]. It functions in the pathway protein modification; protein lipoylation via endogenous pathway; protein N(6)-(lipoyl)lysine from octanoyl-[acyl-carrier-protein]: step 2/2. In terms of biological role, catalyzes the radical-mediated insertion of two sulfur atoms into the C-6 and C-8 positions of the octanoyl moiety bound to the lipoyl domains of lipoate-dependent enzymes, thereby converting the octanoylated domains into lipoylated derivatives. This chain is Lipoyl synthase, found in Bartonella bacilliformis (strain ATCC 35685 / KC583 / Herrer 020/F12,63).